The following is a 76-amino-acid chain: Antimicrobial peptide lumbricin-1 (76 aa).

A propeptide spans 1–14 (MSLCISDYLYLTLT) (removed in mature form).

Displays antimicrobial activity against the Gram-positive bacteria B.subtilis ATCC 62037, S.aureus ATCC 15752 and S.mutans ATCC 25175, the Gram-negative bacteria E.coli ATCC 27325, P.putida ATCC 17426 and Serratia sp. ATCC 21074, and the fungi C.albicans ATCC 10231, C.neoformans ATCC 34881 and S.cerevisiae ATCC 44774. Does not possess hemolytic activity. The protein is Antimicrobial peptide lumbricin-1 of Lumbricus rubellus (Humus earthworm).